The sequence spans 418 residues: Queuine tRNA-ribosyltransferase accessory subunit 2 (418 aa).

Residues C325, C327, C330, and H356 each coordinate Zn(2+).

Belongs to the queuine tRNA-ribosyltransferase family. QTRT2 subfamily. In terms of assembly, heterodimer of a catalytic subunit and an accessory subunit. It depends on Zn(2+) as a cofactor.

Its subcellular location is the cytoplasm. Functionally, non-catalytic subunit of the queuine tRNA-ribosyltransferase (TGT) that catalyzes the base-exchange of a guanine (G) residue with queuine (Q) at position 34 (anticodon wobble position) in tRNAs with GU(N) anticodons (tRNA-Asp, -Asn, -His and -Tyr), resulting in the hypermodified nucleoside queuosine (7-(((4,5-cis-dihydroxy-2-cyclopenten-1-yl)amino)methyl)-7-deazaguanosine). In Drosophila yakuba (Fruit fly), this protein is Queuine tRNA-ribosyltransferase accessory subunit 2.